The chain runs to 156 residues: ATP synthase subunit b (156 aa).

Residues 5 to 25 (LTMIGQAIAFFIFVVFCMKYV) form a helical membrane-spanning segment.

Belongs to the ATPase B chain family. In terms of assembly, F-type ATPases have 2 components, F(1) - the catalytic core - and F(0) - the membrane proton channel. F(1) has five subunits: alpha(3), beta(3), gamma(1), delta(1), epsilon(1). F(0) has three main subunits: a(1), b(2) and c(10-14). The alpha and beta chains form an alternating ring which encloses part of the gamma chain. F(1) is attached to F(0) by a central stalk formed by the gamma and epsilon chains, while a peripheral stalk is formed by the delta and b chains.

The protein resides in the cell inner membrane. In terms of biological role, f(1)F(0) ATP synthase produces ATP from ADP in the presence of a proton or sodium gradient. F-type ATPases consist of two structural domains, F(1) containing the extramembraneous catalytic core and F(0) containing the membrane proton channel, linked together by a central stalk and a peripheral stalk. During catalysis, ATP synthesis in the catalytic domain of F(1) is coupled via a rotary mechanism of the central stalk subunits to proton translocation. Its function is as follows. Component of the F(0) channel, it forms part of the peripheral stalk, linking F(1) to F(0). This Hahella chejuensis (strain KCTC 2396) protein is ATP synthase subunit b.